The chain runs to 299 residues: MNQVEMTEFPVGKPQEALYGVASTPDGALWFTLAKGNAIGRLSPDGAVSRFPLPHTDGQPTTITCGPDGRPWFTLSSANAIGRLAPDGALRMFELPRPASRPFGIAGGHDGCLWFAEMAGDRIGRITIDGDIEEYDLPVKGGYPSCMAAGRDGLMWFTLNQAGAVGSISATAAPRIFPLGAADAAPVGIASDAQGALWIAQAGNGAIVRFDAGGRITEFPLHSRAARPHAIAADAAGNLWFTEWGANRIGRISEAGDLAGYELAAPGSEPHGIAIDPHGCVWAALETGRLVRLQASPRD.

Substrate is bound at residue H229. Residue E269 participates in Mg(2+) binding. Catalysis depends on H271, which acts as the Proton acceptor. E286 contributes to the Mg(2+) binding site.

Belongs to the Vgb family. As to quaternary structure, monomer. Mg(2+) serves as cofactor.

In terms of biological role, inactivates the type B streptogramin antibiotics by linearizing the lactone ring at the ester linkage, generating a free phenylglycine carboxylate and converting the threonyl moiety into 2-amino-butenoic acid. This Bordetella parapertussis (strain 12822 / ATCC BAA-587 / NCTC 13253) protein is Virginiamycin B lyase.